Consider the following 95-residue polypeptide: Aspartyl/glutamyl-tRNA(Asn/Gln) amidotransferase subunit C (95 aa).

Belongs to the GatC family. Heterotrimer of A, B and C subunits.

The catalysed reaction is L-glutamyl-tRNA(Gln) + L-glutamine + ATP + H2O = L-glutaminyl-tRNA(Gln) + L-glutamate + ADP + phosphate + H(+). It carries out the reaction L-aspartyl-tRNA(Asn) + L-glutamine + ATP + H2O = L-asparaginyl-tRNA(Asn) + L-glutamate + ADP + phosphate + 2 H(+). In terms of biological role, allows the formation of correctly charged Asn-tRNA(Asn) or Gln-tRNA(Gln) through the transamidation of misacylated Asp-tRNA(Asn) or Glu-tRNA(Gln) in organisms which lack either or both of asparaginyl-tRNA or glutaminyl-tRNA synthetases. The reaction takes place in the presence of glutamine and ATP through an activated phospho-Asp-tRNA(Asn) or phospho-Glu-tRNA(Gln). The protein is Aspartyl/glutamyl-tRNA(Asn/Gln) amidotransferase subunit C of Laribacter hongkongensis (strain HLHK9).